The chain runs to 263 residues: Small ribosomal subunit protein uS2 (263 aa).

Residues 223–246 (KSLLEQDSDANADEAEVSQEEKDA) form a disordered region. The segment covering 228 to 240 (QDSDANADEAEVS) has biased composition (acidic residues).

Belongs to the universal ribosomal protein uS2 family.

In Campylobacter curvus (strain 525.92), this protein is Small ribosomal subunit protein uS2.